A 226-amino-acid polypeptide reads, in one-letter code: V-type proton ATPase subunit E (226 aa).

Belongs to the V-ATPase E subunit family. V-ATPase is a heteromultimeric enzyme made up of two complexes: the ATP-hydrolytic V1 complex and the proton translocation V0 complex. The V1 complex consists of three catalytic AB heterodimers that form a heterohexamer, three peripheral stalks each consisting of EG heterodimers, one central rotor including subunits D and F, and the regulatory subunits C and H. The proton translocation complex V0 consists of the proton transport subunit a, a ring of proteolipid subunits c9c'', rotary subunit d, subunits e and f, and the accessory subunits VhaAC45 and ATP6AP2.

Functionally, subunit of the V1 complex of vacuolar(H+)-ATPase (V-ATPase), a multisubunit enzyme composed of a peripheral complex (V1) that hydrolyzes ATP and a membrane integral complex (V0) that translocates protons. V-ATPase is responsible for acidifying and maintaining the pH of intracellular compartments and in some cell types, is targeted to the plasma membrane, where it is responsible for acidifying the extracellular environment. The sequence is that of V-type proton ATPase subunit E (Vha26) from Drosophila melanogaster (Fruit fly).